We begin with the raw amino-acid sequence, 640 residues long: 5-aminolevulinate synthase, non-specific, mitochondrial (640 aa).

A mitochondrion-targeting transit peptide spans 1 to 56 (METVVRSCPFLSRVPQAFLQKAGKSLLFYAQNCPKMMEVGAKPAPRALSTAAVHYQ). 2 disordered regions span residues 60 to 103 (ETPP…TSQG) and 143 to 163 (EVAETSGGPSVVSVKTDGGDP). The segment covering 75-92 (VQQTPDGSQQSPDGTQLP) has biased composition (polar residues). Residues R217, S334, and K353 each contribute to the substrate site. Pyridoxal 5'-phosphate is bound by residues S386, H414, and T442. Residue K445 is part of the active site. K445 is subject to N6-(pyridoxal phosphate)lysine. Pyridoxal 5'-phosphate contacts are provided by T474 and T475. A substrate-binding site is contributed by T562. Position 576 is a hydroxyproline (P576).

Belongs to the class-II pyridoxal-phosphate-dependent aminotransferase family. In terms of assembly, homodimer. Interacts (hydroxylated form) with VHL. Pyridoxal 5'-phosphate serves as cofactor. Post-translationally, in normoxia, is hydroxylated at Pro-576, promoting interaction with VHL, initiating ubiquitination and subsequent degradation via the proteasome. Ubiquitinated; in normoxia following hydroxylation and interaction with VHL, leading to its subsequent degradation via the proteasome.

It is found in the mitochondrion inner membrane. The enzyme catalyses succinyl-CoA + glycine + H(+) = 5-aminolevulinate + CO2 + CoA. It functions in the pathway porphyrin-containing compound metabolism; protoporphyrin-IX biosynthesis; 5-aminolevulinate from glycine: step 1/1. Its function is as follows. Catalyzes the pyridoxal 5'-phosphate (PLP)-dependent condensation of succinyl-CoA and glycine to form aminolevulinic acid (ALA), with CoA and CO2 as by-products. The protein is 5-aminolevulinate synthase, non-specific, mitochondrial (ALAS1) of Pongo abelii (Sumatran orangutan).